Consider the following 243-residue polypeptide: UPF0246 protein spyM18_2163 (243 aa).

It belongs to the UPF0246 family.

The polypeptide is UPF0246 protein spyM18_2163 (Streptococcus pyogenes serotype M18 (strain MGAS8232)).